The primary structure comprises 678 residues: NADPH--cytochrome P450 reductase (678 aa).

G2 is subject to N-acetylglycine. Residues 2–22 lie on the Lumenal side of the membrane; sequence GDSHEDTSATMPEAVAEEVSL. The chain crosses the membrane as a helical span at residues 23–43; the sequence is FSTTDMVLFSLIVGVLTYWFI. The Cytoplasmic segment spans residues 44 to 678; sequence FRKKKEEIPE…KGRYSLDVWS (635 aa). The Flavodoxin-like domain occupies 80–224; the sequence is IIVFYGSQTG…DFITWREQFW (145 aa). Residues 86-91, 138-141, 173-182, and D208 contribute to the FMN site; these read SQTGTA, ATYG, and LGNKTYEHFN. Residues 279-521 enclose the FAD-binding FR-type domain; the sequence is KNPFLAAVTA…FVRKSQFRLP (243 aa). R298 contacts NADP(+). FAD-binding positions include R424, 454–457, 472–474, Y478, and 488–491; these read RYYS, CAV, and GVAT. Residues T535, 596–597, 602–606, and D639 contribute to the NADP(+) site; these read SR and KVYVQ. W677 serves as a coordination point for FAD.

The protein belongs to the NADPH--cytochrome P450 reductase family. This sequence in the N-terminal section; belongs to the flavodoxin family. It in the C-terminal section; belongs to the flavoprotein pyridine nucleotide cytochrome reductase family. The cofactor is FAD. FMN serves as cofactor.

The protein localises to the endoplasmic reticulum membrane. The enzyme catalyses 2 oxidized [cytochrome P450] + NADPH = 2 reduced [cytochrome P450] + NADP(+) + H(+). This enzyme is required for electron transfer from NADP to cytochrome P450 in microsomes. It can also provide electron transfer to heme oxygenase and cytochrome B5. This chain is NADPH--cytochrome P450 reductase, found in Rattus norvegicus (Rat).